The sequence spans 248 residues: Type III pantothenate kinase (248 aa).

8–15 (DAGNTRTK) is an ATP binding site. Residues tyrosine 87 and 94–97 (GVDR) contribute to the substrate site. Aspartate 96 functions as the Proton acceptor in the catalytic mechanism. Threonine 119 is a binding site for ATP. Threonine 173 is a substrate binding site.

It belongs to the type III pantothenate kinase family. Homodimer. NH4(+) is required as a cofactor. The cofactor is K(+).

It localises to the cytoplasm. The enzyme catalyses (R)-pantothenate + ATP = (R)-4'-phosphopantothenate + ADP + H(+). The protein operates within cofactor biosynthesis; coenzyme A biosynthesis; CoA from (R)-pantothenate: step 1/5. Its function is as follows. Catalyzes the phosphorylation of pantothenate (Pan), the first step in CoA biosynthesis. The protein is Type III pantothenate kinase of Methylobacillus flagellatus (strain ATCC 51484 / DSM 6875 / VKM B-1610 / KT).